Here is a 90-residue protein sequence, read N- to C-terminus: Probable Fe(2+)-trafficking protein (90 aa).

This sequence belongs to the Fe(2+)-trafficking protein family.

In terms of biological role, could be a mediator in iron transactions between iron acquisition and iron-requiring processes, such as synthesis and/or repair of Fe-S clusters in biosynthetic enzymes. The chain is Probable Fe(2+)-trafficking protein from Nitrosococcus oceani (strain ATCC 19707 / BCRC 17464 / JCM 30415 / NCIMB 11848 / C-107).